Reading from the N-terminus, the 426-residue chain is 5-methylthioadenosine/S-adenosylhomocysteine deaminase (426 aa).

The Zn(2+) site is built by His-60 and His-62. Glu-89 and His-179 together coordinate substrate. His-206 serves as a coordination point for Zn(2+). Substrate is bound by residues Glu-209 and Asp-294. Zn(2+) is bound at residue Asp-294.

It belongs to the metallo-dependent hydrolases superfamily. MTA/SAH deaminase family. The cofactor is Zn(2+).

The catalysed reaction is S-adenosyl-L-homocysteine + H2O + H(+) = S-inosyl-L-homocysteine + NH4(+). It carries out the reaction S-methyl-5'-thioadenosine + H2O + H(+) = S-methyl-5'-thioinosine + NH4(+). Catalyzes the deamination of 5-methylthioadenosine and S-adenosyl-L-homocysteine into 5-methylthioinosine and S-inosyl-L-homocysteine, respectively. Is also able to deaminate adenosine. The chain is 5-methylthioadenosine/S-adenosylhomocysteine deaminase from Dictyoglomus turgidum (strain DSM 6724 / Z-1310).